We begin with the raw amino-acid sequence, 1013 residues long: Poly [ADP-ribose] polymerase 1 (1013 aa).

Ala2 carries the N-acetylalanine modification. Residues 9-93 form a PARP-type 1 zinc finger; sequence YRVQYAKSGR…KVKKTAEAGG (85 aa). Residues Cys21 and Cys24 each coordinate Zn(2+). A Phosphoserine modification is found at Ser41. 2 residues coordinate Zn(2+): His53 and Cys56. An N6-acetyllysine mark is found at Lys97 and Lys105. The PARP-type 2 zinc finger occupies 113–203; sequence FAAEYAKSNR…ALKKQLPAIK (91 aa). Zn(2+) contacts are provided by Cys125 and Cys128. Lys131 is modified (N6-acetyllysine). Positions 159 and 162 each coordinate Zn(2+). Residues Ser177, Ser179, and Ser185 each carry the phosphoserine modification. A Glycyl lysine isopeptide (Lys-Gly) (interchain with G-Cter in SUMO2) cross-link involves residue Lys192. A disordered region spans residues 200 to 226; sequence PAIKNEGKRKGDEVDGTDEVAKKKSRK. Lys203 participates in a covalent cross-link: Glycyl lysine isopeptide (Lys-Gly) (interchain with G-Cter in SUMO1); alternate. Residue Lys203 forms a Glycyl lysine isopeptide (Lys-Gly) (interchain with G-Cter in SUMO2); alternate linkage. Positions 204–226 are enriched in basic and acidic residues; it reads NEGKRKGDEVDGTDEVAKKKSRK. 2 short sequence motifs (nuclear localization signal) span residues 207-209 and 221-226; these read KRK and KKKSRK. The region spanning 225 to 359 is the PADR1 zinc-binding domain; that stretch reads RKETDKYSKL…VKKQDRIFPP (135 aa). Residue Lys249 forms a Glycyl lysine isopeptide (Lys-Gly) (interchain with G-Cter in SUMO2) linkage. 2 positions are modified to phosphoserine: Ser274 and Ser277. A zinc ribbon region spans residues 290 to 332; sequence GALLPCKECSGQLVFKSDAYYCTGDVTAWTKCMVKTQNPSRKE. The Zn(2+) site is built by Cys295, Cys298, Cys311, and Cys321. The segment at 373–523 is automodification domain; the sequence is VTSAPTAVNS…GVNKSEKRMK (151 aa). A BRCT domain is found at 385-476; the sequence is PADKPLSNMK…KSLQDLLSAH (92 aa). Asp387 carries the post-translational modification PolyADP-ribosyl aspartic acid. PolyADP-ribosyl glutamic acid occurs at positions 407, 413, 435, 437, 444, 445, 448, and 456. Lys467 participates in a covalent cross-link: Glycyl lysine isopeptide (Lys-Gly) (interchain with G-Cter in SUMO2). Glu484 is modified (polyADP-ribosyl glutamic acid). Lys486 participates in a covalent cross-link: Glycyl lysine isopeptide (Lys-Gly) (interchain with G-Cter in SUMO1); alternate. Lys486 is covalently cross-linked (Glycyl lysine isopeptide (Lys-Gly) (interchain with G-Cter in SUMO2); alternate). A polyADP-ribosyl glutamic acid mark is found at Glu488 and Glu491. The tract at residues 489 to 508 is disordered; the sequence is PGEVVAPRGKSAAPSKKSKG. The segment covering 494–503 has biased composition (low complexity); sequence APRGKSAAPS. 3 positions are modified to ADP-ribosylserine: Ser499, Ser503, and Ser506. A Glycyl lysine isopeptide (Lys-Gly) (interchain with G-Cter in SUMO2) cross-link involves residue Lys511. Glu512 and Glu513 each carry polyADP-ribosyl glutamic acid. At Ser518 the chain carries ADP-ribosylserine. Position 519 is a polyADP-ribosyl glutamic acid (Glu519). Lys520 is modified (N6-(ADP-ribosyl)lysine). Lys527 is covalently cross-linked (Glycyl lysine isopeptide (Lys-Gly) (interchain with G-Cter in SUMO2)). The WGR domain maps to 541–637; that stretch reads SAHVLEKGGK…KNFTKYPKKF (97 aa). Position 593 is a phosphothreonine (Thr593). Lys599 and Lys620 each carry N6-acetyllysine. The region spanning 661 to 778 is the PARP alpha-helical domain; sequence KSKLPKPVQE…DIEVAYSLLR (118 aa). Lys747 participates in a covalent cross-link: Glycyl lysine isopeptide (Lys-Gly) (interchain with G-Cter in SUMO1); alternate. Residue Lys747 forms a Glycyl lysine isopeptide (Lys-Gly) (interchain with G-Cter in SUMO2); alternate linkage. Phosphoserine is present on residues Ser781 and Ser785. The PARP catalytic domain maps to 787–1013; that stretch reads DPIDVNYEKL…LKFNFKTSLW (227 aa). NAD(+)-binding positions include 861–863, Gly870, Arg877, and Ser903; that span reads HGS. Glu987 (for poly [ADP-ribose] polymerase activity) is an active-site residue.

The protein belongs to the ARTD/PARP family. As to quaternary structure, homodimer; PARP-type zinc-fingers from separate PARP1 molecules form a dimer module that specifically recognizes DNA strand breaks. Heterodimer; heterodimerizes with PARP2. Interacts (via the PARP catalytic domain) with HPF1. Interacts with NMNAT1. Interacts with nucleosomes; with a preference for nucleosomes containing H2A.X. Interacts with APTX. Component of a base excision repair (BER) complex, containing at least XRCC1, PARP1, PARP2, POLB and LRIG3. Interacts with SRY. The SWAP complex consists of NPM1, NCL, PARP1 and SWAP70. Interacts with TIAM2. Interacts with PARP3; leading to activate PARP1 in absence of DNA. Interacts (when poly-ADP-ribosylated) with CHD1L (via macro domain). Interacts with the DNA polymerase alpha catalytic subunit POLA1; this interaction functions as part of the control of replication fork progression. Interacts with EEF1A1 and TXK. Interacts with RNF4. Interacts with RNF146. Interacts with ZNF423. Interacts with APLF. Interacts with SNAI1 (via zinc fingers); the interaction requires SNAI1 to be poly-ADP-ribosylated and non-phosphorylated (active) by GSK3B. Interacts (when poly-ADP-ribosylated) with PARP9. Interacts with NR4A3; activates PARP1 by improving acetylation of PARP1 and suppressing the interaction between PARP1 and SIRT1. Interacts (via catalytic domain) with PUM3; the interaction inhibits the poly-ADP-ribosylation activity of PARP1 and the degradation of PARP1 by CASP3 following genotoxic stress. Interacts with ZNF365. Interacts with RRP1B. Interacts with TIMELESS; the interaction is direct. Interacts with CGAS; leading to impede the formation of the PARP1-TIMELESS complex. Interacts with KHDC3L, the interaction is increased following the formation of DNA double-strand breaks. Interacts (when auto-poly-ADP-ribosylated) with XRCC1; leading to inhibit PARP1 ADP-ribosyltransferase activity. Interacts with SPINDOC; promoting PARP1 ADP-ribosyltransferase activity. Interacts with BANF1; leading to inhibit PARP1 ADP-ribosyltransferase activity in response to oxidative DNA damage. Interacts (when sumoylated and ubiquitinated) with VCP/p97; leading to its extraction from chromatin. Interacts with YARS1; promoting PARP1 ADP-ribosyltransferase activity. Interacts with PACMP micropeptide; Interacts with PACMP micropeptide; interaction. Interacts (when poly-ADP-ribosylated) with isoform 1 of MACROH2A1; MACROH2A1 specifically binds to poly-ADP-ribose chains and inhibits PARP1 activity, limiting the consumption of nuclear NAD(+). Interacts with CARM1; promoting recruitment to replication forks. Interacts with RECQL. Interacts with ZNF32; the interaction reshapes ZNF432 interacting proteins. Interacts with TPRN; TPRN interacts with a number of DNA damage response proteins, is recruited to sites of DNA damage and may play a role in DNA damage repair. Interacts (when auto-poly-ADP-ribosylated) with AIFM1. In terms of processing, poly-ADP-ribosylated on serine, glutamate and aspartate residues by autocatalysis. Auto-ADP-ribosylation on serine takes place following interaction with HPF1. Auto poly-ADP-ribosylation on serine residues promotes its dissociation from chromatin. Poly-ADP-ribosylated by PARP2; poly-ADP-ribosylation mediates the recruitment of CHD1L to DNA damage sites. Mono-ADP-ribosylated at Lys-520 by SIRT6 in response to oxidative stress, promoting recruitment to double-strand breaks (DSBs) sites. S-nitrosylated, leading to inhibit transcription regulation activity. Post-translationally, phosphorylated at Thr-593 by PRKDC in response to DNA damage following virus infection, promoting its translocation to the cytosol. Phosphorylated by TXK. In terms of processing, proteolytically cleaved by caspase-3 (CASP3) and caspase-7 (CASP7) in response to apoptosis to generate the Poly [ADP-ribose] polymerase 1, processed N-terminus and Poly [ADP-ribose] polymerase 1, processed C-terminus forms. Sumoylated with SUMO1 or SUMO2 by PIAS4 following prolonged residence (trapping) to chromatin. Sumoylation promotes ubiquitination by RNF4 and removal from chromatin by VCP/p97. Post-translationally, ubiquitinated by RNF4 following sumoylation by PIAS4 in response to prolonged residence (trapping) to chromatin. Ubiquitination promotes removal from chromatin by VCP/p97. In terms of tissue distribution, widely expressed. Expression is correlated with proliferation, with higher levels occurring during early fetal development and organogenesis and in the highly proliferative cell compartments of adult. Expressed in B-cells that have been induced to switch to various Ig isotypes.

Its subcellular location is the chromosome. It localises to the nucleus. The protein resides in the nucleolus. It is found in the cytoplasm. The protein localises to the cytosol. It catalyses the reaction NAD(+) + (ADP-D-ribosyl)n-acceptor = nicotinamide + (ADP-D-ribosyl)n+1-acceptor + H(+).. The enzyme catalyses L-seryl-[protein] + NAD(+) = O-(ADP-D-ribosyl)-L-seryl-[protein] + nicotinamide + H(+). The catalysed reaction is L-aspartyl-[protein] + NAD(+) = 4-O-(ADP-D-ribosyl)-L-aspartyl-[protein] + nicotinamide. It carries out the reaction L-glutamyl-[protein] + NAD(+) = 5-O-(ADP-D-ribosyl)-L-glutamyl-[protein] + nicotinamide. It catalyses the reaction L-tyrosyl-[protein] + NAD(+) = O-(ADP-D-ribosyl)-L-tyrosyl-[protein] + nicotinamide + H(+). The enzyme catalyses L-histidyl-[protein] + NAD(+) = N(tele)-(ADP-D-ribosyl)-L-histidyl-[protein] + nicotinamide + H(+). With respect to regulation, ADP-ribosyltransferase activity is regulated via an allosteric activation mechanism. In absence of activation signal, PARP1 is autoinhibited by the PARP alpha-helical domain (also named HD region), which prevents effective NAD(+)-binding. Activity is highly stimulated by signals, such as DNA strand breaks. Binding to damaged DNA unfolds the PARP alpha-helical domain, relieving autoinhibition. Poly-ADP-ribosyltransferase activity is tightly regulated and PARP1 is removed from damaged chromatin following initial poly-ADP-ribosylation of chromatin to avoid prolonged residence (trapping) that has cytotoxic consequences. A number of factors (VCP/p97) or post-translational modifications (auto-poly-ADP-ribosylation or ubiquitination) promote PARP1 removal from chromatin. Its function is as follows. Poly-ADP-ribosyltransferase that mediates poly-ADP-ribosylation of proteins and plays a key role in DNA repair. Mediates glutamate, aspartate, serine, histidine or tyrosine ADP-ribosylation of proteins: the ADP-D-ribosyl group of NAD(+) is transferred to the acceptor carboxyl group of target residues and further ADP-ribosyl groups are transferred to the 2'-position of the terminal adenosine moiety, building up a polymer with an average chain length of 20-30 units. Serine ADP-ribosylation of proteins constitutes the primary form of ADP-ribosylation of proteins in response to DNA damage. Specificity for the different amino acids is conferred by interacting factors, such as HPF1 and NMNAT1. Following interaction with HPF1, catalyzes serine ADP-ribosylation of target proteins; HPF1 confers serine specificity by completing the PARP1 active site. Also catalyzes tyrosine ADP-ribosylation of target proteins following interaction with HPF1. Following interaction with NMNAT1, catalyzes glutamate and aspartate ADP-ribosylation of target proteins; NMNAT1 confers glutamate and aspartate specificity. PARP1 initiates the repair of DNA breaks: recognizes and binds DNA breaks within chromatin and recruits HPF1, licensing serine ADP-ribosylation of target proteins, such as histones (H2BS6ADPr and H3S10ADPr), thereby promoting decompaction of chromatin and the recruitment of repair factors leading to the reparation of DNA strand breaks. HPF1 initiates serine ADP-ribosylation but restricts the polymerase activity of PARP1 in order to limit the length of poly-ADP-ribose chains. In addition to base excision repair (BER) pathway, also involved in double-strand breaks (DSBs) repair: together with TIMELESS, accumulates at DNA damage sites and promotes homologous recombination repair by mediating poly-ADP-ribosylation. Mediates the poly-ADP-ribosylation of a number of proteins, including itself, APLF, CHFR and NFAT5. In addition to proteins, also able to ADP-ribosylate DNA: catalyzes ADP-ribosylation of DNA strand break termini containing terminal phosphates and a 2'-OH group in single- and double-stranded DNA, respectively. Required for PARP9 and DTX3L recruitment to DNA damage sites. PARP1-dependent PARP9-DTX3L-mediated ubiquitination promotes the rapid and specific recruitment of 53BP1/TP53BP1, UIMC1/RAP80, and BRCA1 to DNA damage sites. PARP1-mediated DNA repair in neurons plays a role in sleep: senses DNA damage in neurons and promotes sleep, facilitating efficient DNA repair. In addition to DNA repair, also involved in other processes, such as transcription regulation, programmed cell death, membrane repair, adipogenesis and innate immunity. Acts as a repressor of transcription: binds to nucleosomes and modulates chromatin structure in a manner similar to histone H1, thereby altering RNA polymerase II. Acts both as a positive and negative regulator of transcription elongation, depending on the context. Acts as a positive regulator of transcription elongation by mediating poly-ADP-ribosylation of NELFE, preventing RNA-binding activity of NELFE and relieving transcription pausing. Acts as a negative regulator of transcription elongation in response to DNA damage by catalyzing poly-ADP-ribosylation of CCNT1, disrupting the phase separation activity of CCNT1 and subsequent activation of CDK9. Involved in replication fork progression following interaction with CARM1: mediates poly-ADP-ribosylation at replication forks, slowing fork progression. Poly-ADP-ribose chains generated by PARP1 also play a role in poly-ADP-ribose-dependent cell death, a process named parthanatos. Also acts as a negative regulator of the cGAS-STING pathway. Acts by mediating poly-ADP-ribosylation of CGAS: PARP1 translocates into the cytosol following phosphorylation by PRKDC and catalyzes poly-ADP-ribosylation and inactivation of CGAS. Acts as a negative regulator of adipogenesis: catalyzes poly-ADP-ribosylation of histone H2B on 'Glu-35' (H2BE35ADPr) following interaction with NMNAT1, inhibiting phosphorylation of H2B at 'Ser-36' (H2BS36ph), thereby blocking expression of pro-adipogenetic genes. Involved in the synthesis of ATP in the nucleus, together with NMNAT1, PARG and NUDT5. Nuclear ATP generation is required for extensive chromatin remodeling events that are energy-consuming. In terms of biological role, promotes AIFM1-mediated apoptosis. This form, which translocates into the cytoplasm following cleavage by caspase-3 (CASP3) and caspase-7 (CASP7) in response to apoptosis, is auto-poly-ADP-ribosylated and serves as a poly-ADP-ribose carrier to induce AIFM1-mediated apoptosis. Functionally, this cleavage form irreversibly binds to DNA breaks and interferes with DNA repair, promoting DNA damage-induced apoptosis. This Mus musculus (Mouse) protein is Poly [ADP-ribose] polymerase 1 (Parp1).